The following is a 313-amino-acid chain: Homoserine O-succinyltransferase (313 aa).

Catalysis depends on Cys142, which acts as the Acyl-thioester intermediate. 2 residues coordinate substrate: Lys163 and Ser192. The Proton acceptor role is filled by His235. The active site involves Glu237. Substrate is bound at residue Arg249.

It belongs to the MetA family.

It localises to the cytoplasm. The enzyme catalyses L-homoserine + succinyl-CoA = O-succinyl-L-homoserine + CoA. It participates in amino-acid biosynthesis; L-methionine biosynthesis via de novo pathway; O-succinyl-L-homoserine from L-homoserine: step 1/1. Its function is as follows. Transfers a succinyl group from succinyl-CoA to L-homoserine, forming succinyl-L-homoserine. The protein is Homoserine O-succinyltransferase of Shewanella sp. (strain MR-4).